The following is a 658-amino-acid chain: Alkyldihydroxyacetonephosphate synthase, peroxisomal (658 aa).

Disordered stretches follow at residues 1 to 41 (MAEA…LRVL) and 63 to 86 (AASA…IPKK). A peroxisome-targeting transit peptide spans 1 to 58 (MAEAAAAAGGTGLGAGASYGSAADRDRDPDPDRAGRRLRVLSGHLLGRPREALSTNEC). Positions 23–35 (ADRDRDPDPDRAG) are enriched in basic and acidic residues. The segment covering 63 to 77 (AASAATAAPTATPAA) has biased composition (low complexity). Ser65 carries the phosphoserine modification. The residue at position 74 (Thr74) is a Phosphothreonine. Lys102 carries the post-translational modification N6-acetyllysine. In terms of domain architecture, FAD-binding PCMH-type spans 202-384 (FERIPDIVLW…TEATIKIRPV (183 aa)). Residues 234–240 (PIGGGTS), 303–309 (DSLEFST), and 316–319 (TRAS) each bind FAD. Lys347 is subject to N6-acetyllysine. FAD is bound at residue 368–374 (EGTLGVI). Arg515 contacts substrate. Tyr578 acts as the Proton donor/acceptor in catalysis. Important for enzyme activity stretches follow at residues 615–617 (HHH) and 654–658 (NRNLL).

It belongs to the FAD-binding oxidoreductase/transferase type 4 family. As to quaternary structure, homodimer. It depends on FAD as a cofactor.

Its subcellular location is the peroxisome membrane. It is found in the peroxisome. It carries out the reaction a long chain fatty alcohol + a 1-acylglycerone 3-phosphate = a 1-O-alkylglycerone 3-phosphate + a long-chain fatty acid + H(+). The enzyme catalyses hexadecan-1-ol + 1-hexadecanoylglycerone 3-phosphate = 1-O-hexadecylglycerone 3-phosphate + hexadecanoate + H(+). The catalysed reaction is 1-hexadecanoylglycerone 3-phosphate + a long-chain fatty acid = a 1-acylglycerone 3-phosphate + hexadecanoate. The protein operates within glycerolipid metabolism; ether lipid biosynthesis. Its function is as follows. Catalyzes the exchange of the acyl chain in acyl-dihydroxyacetonephosphate (acyl-DHAP) for a long chain fatty alcohol, yielding the first ether linked intermediate, i.e. alkyl-dihydroxyacetonephosphate (alkyl-DHAP), in the pathway of ether lipid biosynthesis. The chain is Alkyldihydroxyacetonephosphate synthase, peroxisomal (AGPS) from Homo sapiens (Human).